The following is a 538-amino-acid chain: Bifunctional purine biosynthesis protein PurH (538 aa).

The MGS-like domain occupies 8–158 (IPAPDKVEIK…KNHAYVTILT (151 aa)).

Belongs to the PurH family.

The enzyme catalyses (6R)-10-formyltetrahydrofolate + 5-amino-1-(5-phospho-beta-D-ribosyl)imidazole-4-carboxamide = 5-formamido-1-(5-phospho-D-ribosyl)imidazole-4-carboxamide + (6S)-5,6,7,8-tetrahydrofolate. It catalyses the reaction IMP + H2O = 5-formamido-1-(5-phospho-D-ribosyl)imidazole-4-carboxamide. It participates in purine metabolism; IMP biosynthesis via de novo pathway; 5-formamido-1-(5-phospho-D-ribosyl)imidazole-4-carboxamide from 5-amino-1-(5-phospho-D-ribosyl)imidazole-4-carboxamide (10-formyl THF route): step 1/1. The protein operates within purine metabolism; IMP biosynthesis via de novo pathway; IMP from 5-formamido-1-(5-phospho-D-ribosyl)imidazole-4-carboxamide: step 1/1. The polypeptide is Bifunctional purine biosynthesis protein PurH (Rhizobium etli (strain ATCC 51251 / DSM 11541 / JCM 21823 / NBRC 15573 / CFN 42)).